The chain runs to 300 residues: uncharacterized protein (300 aa).

Belongs to the chlamydial CPn_0593/CT_474/TC_0759 family.

This is an uncharacterized protein from Chlamydia muridarum (strain MoPn / Nigg).